The chain runs to 156 residues: Small ribosomal subunit protein uS7 (156 aa).

It belongs to the universal ribosomal protein uS7 family. Part of the 30S ribosomal subunit. Contacts proteins S9 and S11.

In terms of biological role, one of the primary rRNA binding proteins, it binds directly to 16S rRNA where it nucleates assembly of the head domain of the 30S subunit. Is located at the subunit interface close to the decoding center, probably blocks exit of the E-site tRNA. The sequence is that of Small ribosomal subunit protein uS7 from Acaryochloris marina (strain MBIC 11017).